A 1075-amino-acid chain; its full sequence is Error-prone DNA polymerase (1075 aa).

It belongs to the DNA polymerase type-C family. DnaE2 subfamily.

It localises to the cytoplasm. It catalyses the reaction DNA(n) + a 2'-deoxyribonucleoside 5'-triphosphate = DNA(n+1) + diphosphate. Functionally, DNA polymerase involved in damage-induced mutagenesis and translesion synthesis (TLS). It is not the major replicative DNA polymerase. The protein is Error-prone DNA polymerase of Ralstonia nicotianae (strain ATCC BAA-1114 / GMI1000) (Ralstonia solanacearum).